The chain runs to 538 residues: uncharacterized protein (538 aa).

The first 17 residues, 1-17, serve as a signal peptide directing secretion; that stretch reads MSFSATILFSPPSGSEA. Positions 101 to 131 are disordered; that stretch reads RQGKVSIPDEDGESRAHSSPPEEPGPLKESP. Glycyl lysine isopeptide (Lys-Gly) (interchain with G-Cter in SUMO2) cross-links involve residues lysine 128 and lysine 221. The residue at position 224 (serine 224) is a Phosphoserine. The disordered stretch occupies residues 233–253; it reads RATPETGPENGTKLPPPRPED. A phosphoserine mark is found at serine 285 and serine 428. The segment at 488 to 523 is disordered; that stretch reads LPPELYNPNFQEEEDEGGDENAPGSPSFDQPHKTCC.

It is found in the secreted. This is an uncharacterized protein from Homo sapiens (Human).